A 188-amino-acid polypeptide reads, in one-letter code: Peptidyl-tRNA hydrolase (188 aa).

Phe15 is a binding site for tRNA. His20 (proton acceptor) is an active-site residue. TRNA-binding residues include Tyr64, Asn66, and Asn112.

It belongs to the PTH family. Monomer.

The protein localises to the cytoplasm. The catalysed reaction is an N-acyl-L-alpha-aminoacyl-tRNA + H2O = an N-acyl-L-amino acid + a tRNA + H(+). In terms of biological role, hydrolyzes ribosome-free peptidyl-tRNAs (with 1 or more amino acids incorporated), which drop off the ribosome during protein synthesis, or as a result of ribosome stalling. Functionally, catalyzes the release of premature peptidyl moieties from peptidyl-tRNA molecules trapped in stalled 50S ribosomal subunits, and thus maintains levels of free tRNAs and 50S ribosomes. The polypeptide is Peptidyl-tRNA hydrolase (Borreliella afzelii (strain PKo) (Borrelia afzelii)).